Reading from the N-terminus, the 380-residue chain is Lipid-A-disaccharide synthase (380 aa).

This sequence belongs to the LpxB family.

It catalyses the reaction a lipid X + a UDP-2-N,3-O-bis[(3R)-3-hydroxyacyl]-alpha-D-glucosamine = a lipid A disaccharide + UDP + H(+). The protein operates within bacterial outer membrane biogenesis; LPS lipid A biosynthesis. In terms of biological role, condensation of UDP-2,3-diacylglucosamine and 2,3-diacylglucosamine-1-phosphate to form lipid A disaccharide, a precursor of lipid A, a phosphorylated glycolipid that anchors the lipopolysaccharide to the outer membrane of the cell. This Pseudomonas syringae pv. tomato (strain ATCC BAA-871 / DC3000) protein is Lipid-A-disaccharide synthase.